The chain runs to 291 residues: Small ribosomal subunit biogenesis GTPase RsgA (291 aa).

In terms of domain architecture, CP-type G spans 63–221 (KNEIKRPPVS…IADTPGFSAL (159 aa)). GTP is bound by residues 112-115 (TKKD) and 164-172 (GQSGVGKST). Zn(2+)-binding residues include Cys245, Cys250, His252, and Cys258.

It belongs to the TRAFAC class YlqF/YawG GTPase family. RsgA subfamily. As to quaternary structure, monomer. Associates with 30S ribosomal subunit, binds 16S rRNA. Zn(2+) serves as cofactor.

The protein resides in the cytoplasm. Its function is as follows. One of several proteins that assist in the late maturation steps of the functional core of the 30S ribosomal subunit. Helps release RbfA from mature subunits. May play a role in the assembly of ribosomal proteins into the subunit. Circularly permuted GTPase that catalyzes slow GTP hydrolysis, GTPase activity is stimulated by the 30S ribosomal subunit. The polypeptide is Small ribosomal subunit biogenesis GTPase RsgA (Staphylococcus saprophyticus subsp. saprophyticus (strain ATCC 15305 / DSM 20229 / NCIMB 8711 / NCTC 7292 / S-41)).